A 113-amino-acid chain; its full sequence is Hydrogenase maturation factor HypA (113 aa).

Residue His2 participates in Ni(2+) binding. Residues Cys73, Cys76, Cys89, and Cys92 each contribute to the Zn(2+) site.

The protein belongs to the HypA/HybF family.

Functionally, involved in the maturation of [NiFe] hydrogenases. Required for nickel insertion into the metal center of the hydrogenase. The chain is Hydrogenase maturation factor HypA from Picosynechococcus sp. (strain ATCC 27264 / PCC 7002 / PR-6) (Agmenellum quadruplicatum).